The primary structure comprises 244 residues: Cysteine-rich secretory protein 2 (244 aa).

Residues 1 to 21 form the signal peptide; the sequence is MALLPVVVFLITMLLPCVLTN. Residues 43 to 170 form the SCP domain; it reads NKHNQLRKSV…SLKYYYVCQY (128 aa). Disulfide bonds link Cys-190–Cys-197, Cys-193–Cys-202, Cys-206–Cys-239, Cys-215–Cys-233, and Cys-224–Cys-237. Positions 206-239 constitute a ShKT domain; it reads CEYEDLLSNCESLKNTAGCEHQLLVEKCKATCRC.

This sequence belongs to the CRISP family. As to quaternary structure, interacts with NSUN4 isoform 3. Testis.

It localises to the secreted. Functionally, may regulate some ion channels' activity and thereby regulate calcium fluxes during sperm capacitation. The polypeptide is Cysteine-rich secretory protein 2 (CRISP2) (Cavia porcellus (Guinea pig)).